We begin with the raw amino-acid sequence, 58 residues long: Cyclotide trypsin inhibitor TopI1 (58 aa).

The N-terminal stretch at 1-23 (MKFIIVLLLLTALTLTSIPVIEG) is a signal peptide. A cross-link (cyclopeptide (Ile-Lys)) is located at residues 24 to 55 (ILKRCKTYDDCKDVCKARKGKCEFGICKCMIK). 3 disulfide bridges follow: cysteine 28-cysteine 45, cysteine 34-cysteine 50, and cysteine 38-cysteine 52. Serine 56 bears the Serine amide mark.

In terms of processing, this is a cyclic peptide. In terms of tissue distribution, expressed by the venom gland.

It is found in the secreted. Functionally, first cyclic scorpion trypsin inhibitor (Kd~0.5 nM). Does not inhibit chymotrypsin. The chain is Cyclotide trypsin inhibitor TopI1 from Tityus obscurus (Amazonian scorpion).